Reading from the N-terminus, the 227-residue chain is Urease accessory protein UreF 2 (227 aa).

This sequence belongs to the UreF family. As to quaternary structure, ureD, UreF and UreG form a complex that acts as a GTP-hydrolysis-dependent molecular chaperone, activating the urease apoprotein by helping to assemble the nickel containing metallocenter of UreC. The UreE protein probably delivers the nickel.

The protein localises to the cytoplasm. In terms of biological role, required for maturation of urease via the functional incorporation of the urease nickel metallocenter. In Brucella anthropi (strain ATCC 49188 / DSM 6882 / CCUG 24695 / JCM 21032 / LMG 3331 / NBRC 15819 / NCTC 12168 / Alc 37) (Ochrobactrum anthropi), this protein is Urease accessory protein UreF 2.